The chain runs to 152 residues: Heavy metal-associated isoprenylated plant protein 22 (152 aa).

Residues 28–91 (MQTVNIKVKI…TVQSTGKKKA (64 aa)) form the HMA domain. Residues C39 and C42 each coordinate a metal cation. The tract at residues 123 to 152 (SEQAQAQPGSTDDKLMSLFSDENPNACTVM) is disordered. The span at 142–152 (SDENPNACTVM) shows a compositional bias: polar residues. C149 bears the Cysteine methyl ester mark. Residue C149 is the site of S-farnesyl cysteine attachment. The propeptide at 150–152 (TVM) is removed in mature form.

The protein belongs to the HIPP family. As to quaternary structure, interacts with ZHD11/HB29. Expressed in lateral roots and mature anthers.

Its subcellular location is the membrane. Functionally, heavy-metal-binding protein. Binds cadmium. May be involved in cadmium transport and play a role in cadmium detoxification. This chain is Heavy metal-associated isoprenylated plant protein 22, found in Arabidopsis thaliana (Mouse-ear cress).